A 192-amino-acid chain; its full sequence is Elongation factor P (192 aa).

The protein belongs to the elongation factor P family.

It localises to the cytoplasm. It functions in the pathway protein biosynthesis; polypeptide chain elongation. Involved in peptide bond synthesis. Stimulates efficient translation and peptide-bond synthesis on native or reconstituted 70S ribosomes in vitro. Probably functions indirectly by altering the affinity of the ribosome for aminoacyl-tRNA, thus increasing their reactivity as acceptors for peptidyl transferase. This is Elongation factor P (efp) from Borreliella burgdorferi (strain ATCC 35210 / DSM 4680 / CIP 102532 / B31) (Borrelia burgdorferi).